A 360-amino-acid chain; its full sequence is Phospho-N-acetylmuramoyl-pentapeptide-transferase (360 aa).

The Periplasmic segment spans residues Met1 to Arg25. A helical transmembrane segment spans residues Ala26–Ala46. Over Arg47–Thr71 the chain is Cytoplasmic. The chain crosses the membrane as a helical span at residues Pro72–Tyr92. Pro93 is a topological domain (periplasmic). The chain crosses the membrane as a helical span at residues Ser94–Val114. At Asp115–Arg131 the chain is on the cytoplasmic side. A helical membrane pass occupies residues Trp132 to Gly152. The Periplasmic segment spans residues Lys153–Asp167. The chain crosses the membrane as a helical span at residues Val168–Gly188. Residues Asn189 to Asp198 are Cytoplasmic-facing. Residues Gly199–Thr219 form a helical membrane-spanning segment. The Periplasmic segment spans residues Gly220–His235. A helical transmembrane segment spans residues Ala236–Phe256. Topologically, residues Asn257 to Gln262 are cytoplasmic. Residues Val263–Leu283 traverse the membrane as a helical segment. At Leu284–Glu287 the chain is on the periplasmic side. The chain crosses the membrane as a helical span at residues Phe288 to Val308. The Cytoplasmic portion of the chain corresponds to Gly309–Arg337. The helical transmembrane segment at Val338–Lys358 threads the bilayer. Topologically, residues Val359–Arg360 are periplasmic.

Belongs to the glycosyltransferase 4 family. MraY subfamily. Mg(2+) serves as cofactor.

It localises to the cell inner membrane. It carries out the reaction UDP-N-acetyl-alpha-D-muramoyl-L-alanyl-gamma-D-glutamyl-meso-2,6-diaminopimeloyl-D-alanyl-D-alanine + di-trans,octa-cis-undecaprenyl phosphate = di-trans,octa-cis-undecaprenyl diphospho-N-acetyl-alpha-D-muramoyl-L-alanyl-D-glutamyl-meso-2,6-diaminopimeloyl-D-alanyl-D-alanine + UMP. Its pathway is cell wall biogenesis; peptidoglycan biosynthesis. In terms of biological role, catalyzes the initial step of the lipid cycle reactions in the biosynthesis of the cell wall peptidoglycan: transfers peptidoglycan precursor phospho-MurNAc-pentapeptide from UDP-MurNAc-pentapeptide onto the lipid carrier undecaprenyl phosphate, yielding undecaprenyl-pyrophosphoryl-MurNAc-pentapeptide, known as lipid I. The sequence is that of Phospho-N-acetylmuramoyl-pentapeptide-transferase from Salmonella paratyphi C (strain RKS4594).